Here is a 185-residue protein sequence, read N- to C-terminus: Elongation factor P (185 aa).

The protein belongs to the elongation factor P family.

The protein localises to the cytoplasm. Its pathway is protein biosynthesis; polypeptide chain elongation. Its function is as follows. Involved in peptide bond synthesis. Stimulates efficient translation and peptide-bond synthesis on native or reconstituted 70S ribosomes in vitro. Probably functions indirectly by altering the affinity of the ribosome for aminoacyl-tRNA, thus increasing their reactivity as acceptors for peptidyl transferase. This Aromatoleum aromaticum (strain DSM 19018 / LMG 30748 / EbN1) (Azoarcus sp. (strain EbN1)) protein is Elongation factor P.